An 84-amino-acid polypeptide reads, in one-letter code: U4-theraphotoxin-Hhn1a (84 aa).

A signal peptide spans 1–22; it reads MKVTLIAIPTCAAVLVLHTTAA. A propeptide spanning residues 23-47 is cleaved from the precursor; that stretch reads EELEESQLMEVGMPDTELAAVDEER. 3 cysteine pairs are disulfide-bonded: Cys51/Cys65, Cys55/Cys76, and Cys70/Cys81.

Belongs to the neurotoxin 12 (Hwtx-2) family. 02 (Hwtx-2) subfamily. As to expression, expressed by the venom gland.

It is found in the secreted. In terms of biological role, postsynaptic neurotoxin. The chain is U4-theraphotoxin-Hhn1a from Cyriopagopus hainanus (Chinese bird spider).